The following is a 2191-amino-acid chain: Genome polyprotein (2191 aa).

The N-myristoyl glycine; by host moiety is linked to residue Gly2. Topologically, residues 2–1501 (GAQVSTQKTG…HVSRAFICLQ (1500 aa)) are cytoplasmic. Residues 566–582 (FYQNDVQNAVERSIVRV) form an amphipathic alpha-helix region. Active-site for protease 2A activity residues include His878 and Asp896. Residues Cys913 and Cys915 each contribute to the Zn(2+) site. Cys967 serves as the catalytic For protease 2A activity. Cys973 and His975 together coordinate Zn(2+). The segment at 1107–1179 (NNGWLKKFTE…EQSAPSQSDQ (73 aa)) is membrane-binding. The oligomerization stretch occupies residues 1107 to 1245 (NNGWLKKFTE…SPGVGKSVAT (139 aa)). An RNA-binding region spans residues 1128-1132 (AIKIQ). Residues 1211-1367 (EKKMSNYIQF…SMYNQNGKIN (157 aa)) form the SF3 helicase domain. Residues Cys1375, Cys1387, and Cys1392 each coordinate Zn(2+). The segment at 1375–1392 (CDEECCPVNFKKCCPLVC) adopts a C4-type; degenerate zinc-finger fold. An RNA-binding region spans residues 1419–1426 (EYNHRHSV). An oligomerization region spans residues 1430–1435 (LEALFQ). Residues 1502–1517 (ALTTFVSVAGIIYIIY) lie within the membrane without spanning it. Residues 1518–2191 (KLFAGFQGAY…TLRRKWLDSF (674 aa)) lie on the Cytoplasmic side of the membrane. Residue Tyr1527 is modified to O-(5'-phospho-RNA)-tyrosine. A Peptidase C3 domain is found at 1547–1725 (GPAFEFAVAM…FSAALLKHYF (179 aa)). Active-site for protease 3C activity residues include His1586, Glu1617, and Cys1693. Residues 1956–2072 (GHLIAFDYSG…SYPWPIDASL (117 aa)) enclose the RdRp catalytic domain. Positions 1962 and 2058 each coordinate Mg(2+).

This sequence belongs to the picornaviruses polyprotein family. As to quaternary structure, interacts with capsid protein VP1 and capsid protein VP3 to form heterotrimeric protomers. Interacts with capsid protein VP0, and capsid protein VP3 to form heterotrimeric protomers. Five protomers subsequently associate to form pentamers which serve as building blocks for the capsid. Interacts with capsid protein VP2, capsid protein VP3 and capsid protein VP4 following cleavage of capsid protein VP0. Interacts with host CD55 and FCGRT; these interactions promote virus attachment to the host cell and subsequent internalization. In terms of assembly, interacts with capsid protein VP1 and capsid protein VP3 in the mature capsid. Interacts with host CD55 and FCGRT; these interactions promote virus attachment to the host cell and subsequent internalization. As to quaternary structure, interacts with capsid protein VP0 and capsid protein VP1 to form heterotrimeric protomers. Five protomers subsequently associate to form pentamers which serve as building blocks for the capsid. Interacts with capsid protein VP4 in the mature capsid. Interacts with protein 2C; this interaction may be important for virion morphogenesis. Interacts with host FCGRT; this interaction promotes virus attachment to the host cell and subsequent internalization. Interacts with capsid protein VP1 and capsid protein VP3. In terms of assembly, homodimer. As to quaternary structure, homohexamer; forms a hexameric ring structure with 6-fold symmetry characteristic of AAA+ ATPases. Interacts (via N-terminus) with host RTN3 (via reticulon domain); this interaction is important for viral replication. Interacts with capsid protein VP3; this interaction may be important for virion morphogenesis. Interacts with protein 3CD. In terms of assembly, homodimer. Interacts with host GBF1. Interacts (via GOLD domain) with host ACBD3 (via GOLD domain); this interaction allows the formation of a viral protein 3A/ACBD3 heterotetramer with a 2:2 stoichiometry, which will stimulate the recruitment of host PI4KB in order to synthesize PI4P at the viral RNA replication sites. As to quaternary structure, interacts with RNA-directed RNA polymerase. Interacts with protein 3AB and with RNA-directed RNA polymerase. In terms of assembly, interacts with Viral protein genome-linked and with protein 3CD. The cofactor is Mg(2+). Specific enzymatic cleavages in vivo by the viral proteases yield processing intermediates and the mature proteins. In terms of processing, myristoylation is required for the formation of pentamers during virus assembly. Further assembly of 12 pentamers and a molecule of genomic RNA generates the provirion. Post-translationally, during virion maturation, immature virions are rendered infectious following cleavage of VP0 into VP4 and VP2. This maturation seems to be an autocatalytic event triggered by the presence of RNA in the capsid and it is followed by a conformational change infectious virion. Myristoylation is required during RNA encapsidation and formation of the mature virus particle. In terms of processing, VPg is uridylylated by the polymerase into VPg-pUpU. This acts as a nucleotide-peptide primer for the genomic RNA replication.

It is found in the virion. It localises to the host cytoplasm. Its subcellular location is the host cytoplasmic vesicle membrane. The protein localises to the host nucleus. It catalyses the reaction a ribonucleoside 5'-triphosphate + H2O = a ribonucleoside 5'-diphosphate + phosphate + H(+). The catalysed reaction is Selective cleavage of Tyr-|-Gly bond in the picornavirus polyprotein.. The enzyme catalyses RNA(n) + a ribonucleoside 5'-triphosphate = RNA(n+1) + diphosphate. It carries out the reaction Selective cleavage of Gln-|-Gly bond in the poliovirus polyprotein. In other picornavirus reactions Glu may be substituted for Gln, and Ser or Thr for Gly.. Its activity is regulated as follows. Replication or transcription is subject to high level of random mutations by the nucleotide analog ribavirin. Forms an icosahedral capsid of pseudo T=3 symmetry with capsid proteins VP2 and VP3. The capsid is 300 Angstroms in diameter, composed of 60 copies of each capsid protein and enclosing the viral positive strand RNA genome. Capsid protein VP1 mainly forms the vertices of the capsid. Capsid protein VP1 interacts with host cell receptor to provide virion attachment to target host cells. This attachment induces virion internalization. Tyrosine kinases are probably involved in the entry process. After binding to its receptor, the capsid undergoes conformational changes. Capsid protein VP1 N-terminus (that contains an amphipathic alpha-helix) and capsid protein VP4 are externalized. Together, they shape a pore in the host membrane through which viral genome is translocated to host cell cytoplasm. Functionally, forms an icosahedral capsid of pseudo T=3 symmetry with capsid proteins VP2 and VP3. The capsid is 300 Angstroms in diameter, composed of 60 copies of each capsid protein and enclosing the viral positive strand RNA genome. Its function is as follows. Lies on the inner surface of the capsid shell. After binding to the host receptor, the capsid undergoes conformational changes. Capsid protein VP4 is released, Capsid protein VP1 N-terminus is externalized, and together, they shape a pore in the host membrane through which the viral genome is translocated into the host cell cytoplasm. In terms of biological role, component of immature procapsids, which is cleaved into capsid proteins VP4 and VP2 after maturation. Allows the capsid to remain inactive before the maturation step. Cysteine protease that cleaves viral polyprotein and specific host proteins. It is responsible for the autocatalytic cleavage between the P1 and P2 regions, which is the first cleavage occurring in the polyprotein. Also cleaves the host translation initiation factor EIF4G1, in order to shut down the capped cellular mRNA translation. Inhibits the host nucleus-cytoplasm protein and RNA trafficking by cleaving host members of the nuclear pores. Counteracts stress granule formation probably by antagonizing its assembly or promoting its dissassembly. Functionally, plays an essential role in the virus replication cycle by acting as a viroporin. Creates a pore in the host endoplasmic reticulum and as a consequence releases Ca2+ in the cytoplasm of infected cell. In turn, high levels of cytoplasmic calcium may trigger membrane trafficking and transport of viral ER-associated proteins to viroplasms, sites of viral genome replication. Its function is as follows. Induces and associates with structural rearrangements of intracellular membranes. Displays RNA-binding, nucleotide binding and NTPase activities. May play a role in virion morphogenesis and viral RNA encapsidation by interacting with the capsid protein VP3. In terms of biological role, localizes the viral replication complex to the surface of membranous vesicles. Together with protein 3CD binds the Cis-Active RNA Element (CRE) which is involved in RNA synthesis initiation. Acts as a cofactor to stimulate the activity of 3D polymerase, maybe through a nucleid acid chaperone activity. Localizes the viral replication complex to the surface of membranous vesicles. It inhibits host cell endoplasmic reticulum-to-Golgi apparatus transport and causes the disassembly of the Golgi complex, possibly through GBF1 interaction. This would result in depletion of MHC, trail receptors and IFN receptors at the host cell surface. Plays an essential role in viral RNA replication by recruiting ACBD3 and PI4KB at the viral replication sites, thereby allowing the formation of the rearranged membranous structures where viral replication takes place. Functionally, acts as a primer for viral RNA replication and remains covalently bound to viral genomic RNA. VPg is uridylylated prior to priming replication into VPg-pUpU. The oriI viral genomic sequence may act as a template for this. The VPg-pUpU is then used as primer on the genomic RNA poly(A) by the RNA-dependent RNA polymerase to replicate the viral genome. During genome replication, the VPg-RNA linkage is removed by the host TDP2, thereby accelerating replication. During the late stage of the replication cycle, host TDP2 is excluded from sites of viral RNA synthesis and encapsidation, allowing for the generation of progeny virions. Its function is as follows. Involved in the viral replication complex and viral polypeptide maturation. It exhibits protease activity with a specificity and catalytic efficiency that is different from protease 3C. Protein 3CD binds to the 5'UTR of the viral genome. In terms of biological role, replicates the viral genomic RNA on the surface of intracellular membranes. May form linear arrays of subunits that propagate along a strong head-to-tail interaction called interface-I. Covalently attaches UMP to a tyrosine of VPg, which is used to prime RNA synthesis. The positive stranded RNA genome is first replicated at virus induced membranous vesicles, creating a dsRNA genomic replication form. This dsRNA is then used as template to synthesize positive stranded RNA genomes. ss(+)RNA genomes are either translated, replicated or encapsidated. Major viral protease that mediates proteolytic processing of the polyprotein. Cleaves host EIF5B, contributing to host translation shutoff. Also cleaves host PABPC1, contributing to host translation shutoff. Cleaves host NLRP1, triggers host N-glycine-mediated degradation of the autoinhibitory NLRP1 N-terminal fragment. In Echovirus 6 (strain Charles), this protein is Genome polyprotein.